The primary structure comprises 731 residues: 1,4-alpha-glucan branching enzyme GlgB (731 aa).

The active-site Nucleophile is the Asp-409. Catalysis depends on Glu-462, which acts as the Proton donor.

This sequence belongs to the glycosyl hydrolase 13 family. GlgB subfamily. As to quaternary structure, monomer.

The catalysed reaction is Transfers a segment of a (1-&gt;4)-alpha-D-glucan chain to a primary hydroxy group in a similar glucan chain.. It functions in the pathway glycan biosynthesis; glycogen biosynthesis. Its function is as follows. Catalyzes the formation of the alpha-1,6-glucosidic linkages in glycogen by scission of a 1,4-alpha-linked oligosaccharide from growing alpha-1,4-glucan chains and the subsequent attachment of the oligosaccharide to the alpha-1,6 position. The chain is 1,4-alpha-glucan branching enzyme GlgB from Roseobacter denitrificans (strain ATCC 33942 / OCh 114) (Erythrobacter sp. (strain OCh 114)).